Consider the following 332-residue polypeptide: MEAIINKLYLQESLTEQESQQLFDTIIRGELDPILMASALTALKIKGETPDEIAGAAKALLANAQPFPRPDYDFADIVGTGGDGHNTINISTTAAFVAAACGLKVAKHGNRSVSSKSGSSDLLDSFGINLAMSAEDTRSAVDSIGVAFLFAPQYHSGVKHAMPVRQTMKTRTIFNILGPLINPARPNIELMGVYSQELVRPIAETMLKMGMKRAAVVHGSGLDEVAIHGDTLVAEIKDGVIHEYTLTPADFGVNTHPLEAIKGGDPEENKAIITHLLTGKGTEAQLSAVAVNVALLMRLFGHEDLKANTQQAIDVMNSGKAYQLVEKLAQHA.

Residues glycine 79, 82 to 83 (GD), threonine 87, 89 to 92 (NIST), 107 to 115 (KHGNRSVSS), and serine 119 contribute to the 5-phospho-alpha-D-ribose 1-diphosphate site. Glycine 79 is an anthranilate binding site. Residue serine 91 coordinates Mg(2+). Asparagine 110 contributes to the anthranilate binding site. An anthranilate-binding site is contributed by arginine 165. Residues aspartate 223 and glutamate 224 each coordinate Mg(2+).

The protein belongs to the anthranilate phosphoribosyltransferase family. Homodimer. The cofactor is Mg(2+).

It catalyses the reaction N-(5-phospho-beta-D-ribosyl)anthranilate + diphosphate = 5-phospho-alpha-D-ribose 1-diphosphate + anthranilate. Its pathway is amino-acid biosynthesis; L-tryptophan biosynthesis; L-tryptophan from chorismate: step 2/5. Its function is as follows. Catalyzes the transfer of the phosphoribosyl group of 5-phosphorylribose-1-pyrophosphate (PRPP) to anthranilate to yield N-(5'-phosphoribosyl)-anthranilate (PRA). This is Anthranilate phosphoribosyltransferase from Vibrio vulnificus (strain YJ016).